Consider the following 800-residue polypeptide: Small ribosomal subunit protein uS3c (800 aa).

Positions 1-118 (MGQKVHPSGF…LQVKKDILVK (118 aa)) are S3-like 1st part. An intervening sequence (IVS) region spans residues 119–664 (LQKTRQYLTN…FLDCKFEELE (546 aa)). The segment at 665 to 800 (RRKTMWVQNL…TKLVTESTGA (136 aa)) is S3-like 2nd part.

The protein belongs to the universal ribosomal protein uS3 family. As to quaternary structure, part of the 30S ribosomal subunit.

The protein resides in the plastid. Its subcellular location is the chloroplast. In Chlamydomonas moewusii (Chlamydomonas eugametos), this protein is Small ribosomal subunit protein uS3c (rps3).